The primary structure comprises 229 residues: Indole-3-glycerol phosphate synthase (229 aa).

This sequence belongs to the TrpC family.

The enzyme catalyses 1-(2-carboxyphenylamino)-1-deoxy-D-ribulose 5-phosphate + H(+) = (1S,2R)-1-C-(indol-3-yl)glycerol 3-phosphate + CO2 + H2O. Its pathway is amino-acid biosynthesis; L-tryptophan biosynthesis; L-tryptophan from chorismate: step 4/5. This chain is Indole-3-glycerol phosphate synthase, found in Pyrococcus abyssi (strain GE5 / Orsay).